The primary structure comprises 463 residues: Probable mannan endo-1,4-beta-mannosidase F (463 aa).

Residues 1–18 (MRSLSSIALLSVVGAASA) form the signal peptide. The CBM1 domain maps to 19–54 (QAGPWAQCGGKSFSGSSECASGWKCQELNEWFSQCV). The interval 57–78 (AESTTPTVSSTPTPTDAPSVSI) is disordered. The segment covering 59-77 (STTPTVSSTPTPTDAPSVS) has biased composition (low complexity). Positions 75-118 (SVSITASATTGINKSISVSSASKSTPLPSSSSASPSPRPTGSGS) are ser-rich linker. N-linked (GlcNAc...) asparagine glycosylation occurs at N87. Residues 93–118 (SSASKSTPLPSSSSASPSPRPTGSGS) are compositionally biased toward low complexity. Residues 93–121 (SSASKSTPLPSSSSASPSPRPTGSGSFAK) are disordered. The interval 119–463 (FAKADGLQFS…MDHMENVNKN (345 aa)) is catalytic. Substrate-binding residues include W171 and N285. The Proton donor role is filled by E286. Substrate is bound at residue Y361. The active-site Nucleophile is E395. W424 serves as a coordination point for substrate.

This sequence belongs to the glycosyl hydrolase 5 (cellulase A) family.

It is found in the secreted. The enzyme catalyses Random hydrolysis of (1-&gt;4)-beta-D-mannosidic linkages in mannans, galactomannans and glucomannans.. Endo-1,4-mannanase, a crucial enzyme for depolymerization of seed galactomannans and wood galactoglucomannans. The chain is Probable mannan endo-1,4-beta-mannosidase F (manF) from Aspergillus flavus (strain ATCC 200026 / FGSC A1120 / IAM 13836 / NRRL 3357 / JCM 12722 / SRRC 167).